The primary structure comprises 172 residues: Adenine phosphoribosyltransferase (172 aa).

It belongs to the purine/pyrimidine phosphoribosyltransferase family. Homodimer.

It is found in the cytoplasm. It catalyses the reaction AMP + diphosphate = 5-phospho-alpha-D-ribose 1-diphosphate + adenine. Its pathway is purine metabolism; AMP biosynthesis via salvage pathway; AMP from adenine: step 1/1. Catalyzes a salvage reaction resulting in the formation of AMP, that is energically less costly than de novo synthesis. This Streptococcus pyogenes serotype M5 (strain Manfredo) protein is Adenine phosphoribosyltransferase.